Reading from the N-terminus, the 78-residue chain is Small ribosomal subunit protein uS19m (78 aa).

Belongs to the universal ribosomal protein uS19 family.

The protein resides in the mitochondrion. The protein is Small ribosomal subunit protein uS19m (RPS19) of Acanthamoeba castellanii (Amoeba).